An 801-amino-acid polypeptide reads, in one-letter code: Probable inorganic carbon transporter subunit DabA (801 aa).

Zn(2+)-binding residues include Cys-298, Asp-300, His-481, and Cys-496. The segment at Arg-575–Glu-596 is disordered.

It belongs to the inorganic carbon transporter (TC 9.A.2) DabA family. In terms of assembly, forms a complex with DabB. Zn(2+) serves as cofactor.

It is found in the cell membrane. Functionally, part of an energy-coupled inorganic carbon pump. In Haloarcula marismortui (strain ATCC 43049 / DSM 3752 / JCM 8966 / VKM B-1809) (Halobacterium marismortui), this protein is Probable inorganic carbon transporter subunit DabA.